The sequence spans 301 residues: NADH-cytochrome b5 reductase 3 (301 aa).

The N-myristoyl glycine moiety is linked to residue G2. The FAD-binding FR-type domain maps to 40-152 (DIKYPLRLID…RGPNGLLVYQ (113 aa)). N6-acetyllysine is present on K42. Position 43 is a phosphotyrosine (Y43). The residue at position 50 (K50) is an N6-acetyllysine. Positions 92, 93, 94, 109, 111, and 114 each coordinate FAD. At K120 the chain carries N6-acetyllysine. Residues K126, M127, S128, and T185 each contribute to the FAD site.

It belongs to the flavoprotein pyridine nucleotide cytochrome reductase family. Component of a complex composed of cytochrome b5, NADH-cytochrome b5 reductase (CYB5R3) and MTARC2. Interacts with MTLN; the interaction is required to maintain cellular lipid composition and leads to stimulation of mitochondrial respiratory complex I activity. FAD is required as a cofactor.

The protein localises to the endoplasmic reticulum membrane. It is found in the mitochondrion outer membrane. The enzyme catalyses 2 Fe(III)-[cytochrome b5] + NADH = 2 Fe(II)-[cytochrome b5] + NAD(+) + H(+). Catalyzes the reduction of two molecules of cytochrome b5 using NADH as the electron donor. This chain is NADH-cytochrome b5 reductase 3 (CYB5R3), found in Bos taurus (Bovine).